The following is a 91-amino-acid chain: Late embryogenis abundant protein 2 (91 aa).

The disordered stretch occupies residues K47–T72.

This sequence belongs to the LEA type 3 family.

It is found in the cytoplasm. The protein localises to the nucleus. This is Late embryogenis abundant protein 2 from Arabidopsis thaliana (Mouse-ear cress).